The primary structure comprises 2667 residues: eIF-2-alpha kinase activator GCN1 (2667 aa).

HEAT repeat units follow at residues 19–56, 95–132, 159–198, 293–330, 336–375, 398–439, 466–503, and 794–832; these read DSFY…HELS, QWIF…VKFT, SFSL…LQHM, DLQS…DFNV, LLKS…RSKD, SQKL…SISI, ELPE…PEAN, and LLNE…ELFV. Residues 842–879 are disordered; it reads RNDRKVKPKTAEEQRDEESRKRIEEKKKIQSGELEKQE. HEAT repeat units follow at residues 929–967, 985–1024, 1085–1122, 1199–1237, 1290–1330, 1333–1370, 1371–1407, 1412–1450, 1454–1491, 1492–1529, 1533–1570, 1572–1608, 1610–1647, 1652–1689, 1691–1728, 1729–1766, 1770–1807, and 1809–1845; these read PIIV…LDRS, LSEI…IIKN, GVET…IYSP, HMIP…ATAL, GELL…HMDA, PKVS…SFKK, QGDR…VKGL, LKNY…TIGR, PYII…QLSG, HGVK…CAPK, SCLP…VIRN, EIQI…HTID, ASLS…LTEP, PYLN…GMGE, NFST…SLDI, SRFN…SLGD, PYLP…QFAV, and GIEV…KLAG. A disordered region spans residues 1853-1875; sequence SNNSSYNAKDDDDDEPGSSGNDI. 10 HEAT repeats span residues 1882-1919, 1923-1960, 1962-1998, 2002-2039, 2040-2078, 2080-2110, 2114-2152, 2154-2190, 2193-2230, and 2264-2301; these read ERLG…NTPK, EILP…KLSD, ILPE…SAKT, PYLS…TFGS, KASN…VRSS, VLPV…DAGE, VHLS…SIDE, GWDT…GNTM, EYPE…SLKK, and KGLA…HTSA. The segment at 2265 to 2412 is RWDBD region; that stretch reads GLASVLPVLI…ISQESKLRAL (148 aa). One copy of the HEAT 37; degenerate repeat lies at 2326 to 2348; it reads QVKSAILQTLSLLISKSPASMKI. The stretch at 2349-2385 is one HEAT 38; degenerate repeat; the sequence is FLHQLQPTFIKCLSDSHKNVRTNAASALGLLMTLSSS. HEAT repeat units follow at residues 2387 to 2421, 2425 to 2462, 2508 to 2545, and 2546 to 2583; these read DQLV…KKPK, ATLD…CFTS, PNMP…ASPL, and TYAK…SNQQ.

It belongs to the GCN1 family. Interacts with eif2ak4/gcn2; this interaction stimulates the eif2ak4/gcn2 kinase activity and is impaired by impact upon a variety of stress conditions, such as amino acid depletion, UV-C irradiation, proteasome inhibitor treatment and glucose deprivation. Interacts with impact; this prevents the interaction of gcn1 with eif2ak4/gcn2 and inhibits eif2ak4/gcn2 kinase activity.

The protein resides in the cytoplasm. Its function is as follows. Ribosome collision sensor that activates a translation quality control pathway when a ribosome has stalled during translation. Directly binds to the ribosome and acts as a sentinel for colliding ribosomes. Gcn1 also acts as a positive activator of the integrated stress response (ISR) by mediating activation of eif2ak4/gcn2 in response to amino acid starvation. Interaction with eif2ak4/gcn2 on translating ribosomes stimulates eif2ak4/gcn2 kinase activity, leading to phosphorylation of eukaryotic translation initiation factor 2 (eIF-2-alpha/eif2s1). EIF2S1/eIF-2-alpha phosphorylation converts EIF2S1/eIF-2-alpha into a global protein synthesis inhibitor, leading to a global attenuation of cap-dependent translation, and thus to a reduced overall utilization of amino acids, while concomitantly initiating the preferential translation of ISR-specific mRNAs, such as the transcriptional activator atf4, and hence allowing atf4-mediated reprogramming of amino acid biosynthetic gene expression to alleviate nutrient depletion. This is eIF-2-alpha kinase activator GCN1 from Dictyostelium discoideum (Social amoeba).